We begin with the raw amino-acid sequence, 427 residues long: UDP-N-acetylglucosamine 1-carboxyvinyltransferase (427 aa).

22 to 23 (KN) lines the phosphoenolpyruvate pocket. R92 lines the UDP-N-acetyl-alpha-D-glucosamine pocket. D116 (proton donor) is an active-site residue. Positions 312 and 334 each coordinate UDP-N-acetyl-alpha-D-glucosamine.

Belongs to the EPSP synthase family. MurA subfamily.

The protein resides in the cytoplasm. The enzyme catalyses phosphoenolpyruvate + UDP-N-acetyl-alpha-D-glucosamine = UDP-N-acetyl-3-O-(1-carboxyvinyl)-alpha-D-glucosamine + phosphate. Its pathway is cell wall biogenesis; peptidoglycan biosynthesis. In terms of biological role, cell wall formation. Adds enolpyruvyl to UDP-N-acetylglucosamine. This Borreliella burgdorferi (strain ATCC 35210 / DSM 4680 / CIP 102532 / B31) (Borrelia burgdorferi) protein is UDP-N-acetylglucosamine 1-carboxyvinyltransferase.